Reading from the N-terminus, the 623-residue chain is Protein EDS1L (623 aa).

The residue at position 2 (A2) is an N-acetylalanine. S123 (nucleophile) is an active-site residue. Active-site charge relay system residues include D187 and H317.

As to quaternary structure, homodimer. Interacts with RPS4, RPS6, SNC1, SRFR1, AvrRps4 and HopA1. Interacts with PAD4 (via N-terminus). Interacts with SAG101. EDS1-SAG101 and EDS1-PAD4 form separate complexes in pathogen-unchallenged cells.

It is found in the nucleus. It localises to the cytoplasm. The protein resides in the microsome. Functionally, positive regulator of basal resistance and of effector-triggered immunity specifically mediated by TIR-NB-LRR resistance proteins. Disruption by bacterial effector of EDS1-TIR-NB-LRR resistance protein interactions constitutes the first step in resistance activation. Triggers early plant defenses and hypersensitive response independently of PAD4, and then recruits PAD4 to potentiate plant defenses through the accumulation of salicylic acid. Nuclear localization is essential for basal and TIR-NB-LRR-conditioned immunity and for reprogramming defense gene expression, while cytoplasmic EDS1 is required to induce a complete immune response. Heterodimerization with PAD4 or SGA101 is necessary for TNL-mediated effector-triggered immunity. Contributes to nonhost resistance against E.amylovora. Has no direct lipase activity. This chain is Protein EDS1L, found in Arabidopsis thaliana (Mouse-ear cress).